Here is a 646-residue protein sequence, read N- to C-terminus: Preterminal protein (646 aa).

Positions arginine 357–arginine 366 match the Nuclear localization signal motif. The residue at position 555 (serine 555) is an O-(5'-phospho-DNA)-serine. A disordered region spans residues leucine 619–methionine 646. Positions proline 624 to alanine 640 are enriched in pro residues.

Belongs to the adenoviridae terminal protein family. As to quaternary structure, heterodimer with the polymerase; this heterodimer binds to bp 9 to 18 of the genome. Interacts with host POU2F1; POU2F1 binds to the auxiliary sequences in the inverted terminal repeats and tethers the pTP-POL heterodimer to the origin DNA thereby participating in the assembly of the pre-initiation complex (POL-TP-DBP-NFIA-POU2F1). In terms of processing, preterminal protein is used to replicate viral genome, upon genomic encapsidation it is processed first into iTP and finally into TP by adenovirus protease.

The protein resides in the host nucleus matrix. In terms of biological role, protein covalently bound to the viral DNA that acts as a primer for viral genomic replication by DNA strand displacement. Assembles on the viral origin of replication in an initiation complex with viral polymerase, DBP, host NFIA and host POU2F1/OCT1. During initiation, the polymerase covalently couples the first dCTP with Ser-580 of pTP. The terminal protein stimulates the template activity over 20 fold compared to protein-free templates. Neo-synthesized viral genomes are linked to two preterminal proteins, one for each 5' end. These new genomes are encapsidated in the nucleus, and during capsid maturation by viral protease, preterminal protein is first cleaved into intermediary (iTP), then into mature TP. May play a role in host nuclear matrix localization of genomic DNA. The sequence is that of Preterminal protein from Homo sapiens (Human).